Consider the following 458-residue polypeptide: Phosphomethylpyrimidine synthase (458 aa).

Substrate contacts are provided by residues N80, M109, Y139, H175, 195–197 (SRG), 236–239 (DSLR), and E275. H279 contacts Zn(2+). Y302 lines the substrate pocket. Residue H343 participates in Zn(2+) binding. Residues C423, C426, and C431 each contribute to the [4Fe-4S] cluster site.

The protein belongs to the ThiC family. Requires [4Fe-4S] cluster as cofactor.

The enzyme catalyses 5-amino-1-(5-phospho-beta-D-ribosyl)imidazole + S-adenosyl-L-methionine = 4-amino-2-methyl-5-(phosphooxymethyl)pyrimidine + CO + 5'-deoxyadenosine + formate + L-methionine + 3 H(+). Its pathway is cofactor biosynthesis; thiamine diphosphate biosynthesis. Catalyzes the synthesis of the hydroxymethylpyrimidine phosphate (HMP-P) moiety of thiamine from aminoimidazole ribotide (AIR) in a radical S-adenosyl-L-methionine (SAM)-dependent reaction. The polypeptide is Phosphomethylpyrimidine synthase (Cyanothece sp. (strain PCC 7425 / ATCC 29141)).